The chain runs to 367 residues: Putative C-&gt;U-editing enzyme APOBEC-4 (367 aa).

Residues 61–177 (PQTKHLTFYE…AWNREALRSL (117 aa)) form the CMP/dCMP-type deaminase domain. His-93 lines the Zn(2+) pocket. Glu-95 (proton donor) is an active-site residue. Zn(2+) is bound by residues Cys-127 and Cys-134.

The protein belongs to the cytidine and deoxycytidylate deaminase family. It depends on Zn(2+) as a cofactor. As to expression, predominantly expressed in testis.

In terms of biological role, putative C to U editing enzyme whose physiological substrate is not yet known. This Homo sapiens (Human) protein is Putative C-&gt;U-editing enzyme APOBEC-4 (APOBEC4).